The sequence spans 119 residues: MTKEQIIEAVKSMTVLELNDLVKAIEEEFGVTAAAPVAVVGGAGEAAAEKTEFDVELANAGAQKIKVIKVVREITGLGLKEAKELVDNTPKVIKEGASKEEAEEIKAKLEEVGAAVEVK.

It belongs to the bacterial ribosomal protein bL12 family. As to quaternary structure, homodimer. Part of the ribosomal stalk of the 50S ribosomal subunit. Forms a multimeric L10(L12)X complex, where L10 forms an elongated spine to which 2 to 4 L12 dimers bind in a sequential fashion. Binds GTP-bound translation factors.

Forms part of the ribosomal stalk which helps the ribosome interact with GTP-bound translation factors. Is thus essential for accurate translation. This Bacillus cytotoxicus (strain DSM 22905 / CIP 110041 / 391-98 / NVH 391-98) protein is Large ribosomal subunit protein bL12.